A 322-amino-acid chain; its full sequence is MEGISNFKTPSKLSEKKKSVLCSTPTINIPASPFMQKLGFGTGVNVYLMKRSPRGLSHSPWAVKKINPICNDHYRSVYQKRLMDEAKILKSLHHPNIVGYRAFTEANDGSLCLAMEYGGEKSLNDLIEERYKASQDPFPAAIILKVALNMARGLKYLHQEKKLLHGDIKSSNVVIKGDFETIKICDVGVSLPLDENMTVTDPEACYIGTEPWKPKEAVEENGVITDKADIFAFGLTLWEMMTLSIPHINLSNDDDDEDKTFDESDFDDEAYYAALGTRPPINMEELDESYQKVIELFSVCTNEDPKDRPSAAHIVEALETDV.

Met1 carries the post-translational modification N-acetylmethionine. A phosphothreonine mark is found at Thr9 and Thr24. Ser32 bears the Phosphoserine mark. Residues 32-322 (SPFMQKLGFG…HIVEALETDV (291 aa)) form the Protein kinase domain. 38 to 46 (LGFGTGVNV) lines the ATP pocket. At Ser59 the chain carries Phosphoserine. Lys64 provides a ligand contact to ATP. Catalysis depends on Asp167, which acts as the Proton acceptor. Residue Lys169 forms a Glycyl lysine isopeptide (Lys-Gly) (interchain with G-Cter in SUMO2) linkage. Residues 320–322 (TDV) are PDZ-interaction.

It belongs to the protein kinase superfamily. STE Ser/Thr protein kinase family. MAP kinase kinase subfamily. Interacts with DLG1 and TP53. Phosphorylated; in a cell-cycle dependent manner at mitosis. In terms of tissue distribution, expressed in the testis and placenta. In the testis, restrictedly expressed in outer cell layer of seminiferous tubules.

The enzyme catalyses L-seryl-[protein] + ATP = O-phospho-L-seryl-[protein] + ADP + H(+). The catalysed reaction is L-threonyl-[protein] + ATP = O-phospho-L-threonyl-[protein] + ADP + H(+). It carries out the reaction L-tyrosyl-[protein] + ATP = O-phospho-L-tyrosyl-[protein] + ADP + H(+). With respect to regulation, activated by phosphorylation. In terms of biological role, phosphorylates MAP kinase p38. Seems to be active only in mitosis. May also play a role in the activation of lymphoid cells. When phosphorylated, forms a complex with TP53, leading to TP53 destabilization and attenuation of G2/M checkpoint during doxorubicin-induced DNA damage. This Homo sapiens (Human) protein is Lymphokine-activated killer T-cell-originated protein kinase (PBK).